The chain runs to 189 residues: Peptidyl-tRNA hydrolase (189 aa).

Position 18 (Tyr-18) interacts with tRNA. The active-site Proton acceptor is His-23. Phe-67, Asn-69, and Asn-115 together coordinate tRNA.

The protein belongs to the PTH family. Monomer.

The protein localises to the cytoplasm. The catalysed reaction is an N-acyl-L-alpha-aminoacyl-tRNA + H2O = an N-acyl-L-amino acid + a tRNA + H(+). Hydrolyzes ribosome-free peptidyl-tRNAs (with 1 or more amino acids incorporated), which drop off the ribosome during protein synthesis, or as a result of ribosome stalling. Functionally, catalyzes the release of premature peptidyl moieties from peptidyl-tRNA molecules trapped in stalled 50S ribosomal subunits, and thus maintains levels of free tRNAs and 50S ribosomes. In Leptospira borgpetersenii serovar Hardjo-bovis (strain JB197), this protein is Peptidyl-tRNA hydrolase.